The sequence spans 347 residues: GMP reductase (347 aa).

108-131 (ADFEKTKQILDLNSALNFVCIDVA) is a binding site for NADP(+). K(+)-binding residues include Gly-181 and Gly-183. The Thioimidate intermediate role is filled by Cys-186. NADP(+) is bound at residue 216–239 (IVSDGGCTTPGDVAKAFGGGADFV).

This sequence belongs to the IMPDH/GMPR family. GuaC type 1 subfamily. Homotetramer.

It carries out the reaction IMP + NH4(+) + NADP(+) = GMP + NADPH + 2 H(+). Its function is as follows. Catalyzes the irreversible NADPH-dependent deamination of GMP to IMP. It functions in the conversion of nucleobase, nucleoside and nucleotide derivatives of G to A nucleotides, and in maintaining the intracellular balance of A and G nucleotides. The chain is GMP reductase from Escherichia coli O81 (strain ED1a).